Consider the following 501-residue polypeptide: Symplectin (501 aa).

Positions 20 to 287 (PKTDMETREE…SKLLVAEILP (268 aa)) constitute a CN hydrolase domain. Glu-60 functions as the Proton acceptor in the catalytic mechanism. Lys-163 (proton donor) is an active-site residue. Catalysis depends on Cys-196, which acts as the Nucleophile. Cys-390 is subject to S-(coelenterazin-3a-yl)cysteine.

This sequence belongs to the carbon-nitrogen hydrolase superfamily. BTD/VNN family. In terms of tissue distribution, photogenic gland (at protein level).

Its function is as follows. Monovalent ion-dependent bioluminescence photoprotein. Displays an emission peak at 470 nm (blue light). Trace amounts of monovalent ion trigger the intramolecular oxidation of the chromophore, didehydrocoelenterazine, with the emission of light. In Sthenoteuthis oualaniensis (Purpleback flying squid), this protein is Symplectin.